Reading from the N-terminus, the 360-residue chain is Phospho-N-acetylmuramoyl-pentapeptide-transferase (360 aa).

Transmembrane regions (helical) follow at residues 26–46, 70–90, 97–117, 134–154, 167–187, 199–219, 236–256, 263–283, 288–308, and 338–358; these read AILG…WVIN, GTPT…TLLW, YVLA…VDDY, YFWQ…TAQI, GVAL…VVGF, GLAI…AYLV, AGEL…FLWF, VFMG…IAVI, IVFI…ILQV, and VIVR…ATLK.

This sequence belongs to the glycosyltransferase 4 family. MraY subfamily. The cofactor is Mg(2+).

It localises to the cell inner membrane. It carries out the reaction UDP-N-acetyl-alpha-D-muramoyl-L-alanyl-gamma-D-glutamyl-meso-2,6-diaminopimeloyl-D-alanyl-D-alanine + di-trans,octa-cis-undecaprenyl phosphate = di-trans,octa-cis-undecaprenyl diphospho-N-acetyl-alpha-D-muramoyl-L-alanyl-D-glutamyl-meso-2,6-diaminopimeloyl-D-alanyl-D-alanine + UMP. It functions in the pathway cell wall biogenesis; peptidoglycan biosynthesis. Functionally, catalyzes the initial step of the lipid cycle reactions in the biosynthesis of the cell wall peptidoglycan: transfers peptidoglycan precursor phospho-MurNAc-pentapeptide from UDP-MurNAc-pentapeptide onto the lipid carrier undecaprenyl phosphate, yielding undecaprenyl-pyrophosphoryl-MurNAc-pentapeptide, known as lipid I. This chain is Phospho-N-acetylmuramoyl-pentapeptide-transferase, found in Saccharophagus degradans (strain 2-40 / ATCC 43961 / DSM 17024).